The following is a 397-amino-acid chain: S-adenosylmethionine synthase (397 aa).

ATP is bound at residue H17. Residue D19 participates in Mg(2+) binding. E45 is a binding site for K(+). L-methionine-binding residues include E58 and Q101. Residues 101–111 (QSPDIAQGVDK) are flexible loop. ATP-binding positions include 176 to 178 (DGK), 243 to 244 (RF), D252, 258 to 259 (RK), and K279. L-methionine is bound at residue D252. Residue K283 participates in L-methionine binding.

It belongs to the AdoMet synthase family. In terms of assembly, homotetramer; dimer of dimers. The cofactor is Mg(2+). K(+) is required as a cofactor.

The protein resides in the cytoplasm. The catalysed reaction is L-methionine + ATP + H2O = S-adenosyl-L-methionine + phosphate + diphosphate. It participates in amino-acid biosynthesis; S-adenosyl-L-methionine biosynthesis; S-adenosyl-L-methionine from L-methionine: step 1/1. Catalyzes the formation of S-adenosylmethionine (AdoMet) from methionine and ATP. The overall synthetic reaction is composed of two sequential steps, AdoMet formation and the subsequent tripolyphosphate hydrolysis which occurs prior to release of AdoMet from the enzyme. The protein is S-adenosylmethionine synthase of Staphylococcus aureus.